We begin with the raw amino-acid sequence, 609 residues long: DNA mismatch repair protein MutL (609 aa).

This sequence belongs to the DNA mismatch repair MutL/HexB family.

In terms of biological role, this protein is involved in the repair of mismatches in DNA. It is required for dam-dependent methyl-directed DNA mismatch repair. May act as a 'molecular matchmaker', a protein that promotes the formation of a stable complex between two or more DNA-binding proteins in an ATP-dependent manner without itself being part of a final effector complex. In Rickettsia felis (strain ATCC VR-1525 / URRWXCal2) (Rickettsia azadi), this protein is DNA mismatch repair protein MutL.